The following is a 149-amino-acid chain: MLFRGRSHRSLDPKGRLMLPPEFRDILLSRSEEGKLVLTSFDGCVVGYPYPDWVEFEDKFNRLKNPSRKMRDFRRLVIGGAEEMTADPQGRVRVSRSHMDYAGLTKDVVLVGQGSRFEIWDQSKFDAIVAQDFDDVTEELAESGIDFCF.

SpoVT-AbrB domains lie at 6 to 52 (RSHR…PYPD) and 81 to 124 (AEEM…DQSK).

It belongs to the MraZ family. Forms oligomers.

The protein localises to the cytoplasm. Its subcellular location is the nucleoid. The sequence is that of Transcriptional regulator MraZ from Nitratidesulfovibrio vulgaris (strain ATCC 29579 / DSM 644 / CCUG 34227 / NCIMB 8303 / VKM B-1760 / Hildenborough) (Desulfovibrio vulgaris).